Here is a 98-residue protein sequence, read N- to C-terminus: Co-chaperonin GroES 3 (98 aa).

It belongs to the GroES chaperonin family. In terms of assembly, heptamer of 7 subunits arranged in a ring. Interacts with the chaperonin GroEL.

The protein resides in the cytoplasm. Functionally, together with the chaperonin GroEL, plays an essential role in assisting protein folding. The GroEL-GroES system forms a nano-cage that allows encapsulation of the non-native substrate proteins and provides a physical environment optimized to promote and accelerate protein folding. GroES binds to the apical surface of the GroEL ring, thereby capping the opening of the GroEL channel. The sequence is that of Co-chaperonin GroES 3 from Mesorhizobium japonicum (strain LMG 29417 / CECT 9101 / MAFF 303099) (Mesorhizobium loti (strain MAFF 303099)).